The chain runs to 1703 residues: Homeobox protein prospero (1703 aa).

Disordered regions lie at residues 23–292 (LKAN…SNGG), 322–357 (SVSTANSSSSNNNNSSTPAALATHSPTSNSPVSGAS), 437–521 (NSIA…QSQL), 608–692 (EPQT…ESVD), 732–751 (EDDDDDCVEQKTSGSGCLKK), 823–844 (QEDSESNELESPQIQQKRVEKN), 875–951 (SECQ…DSGA), 1040–1101 (FEQE…RMGG), 1197–1217 (SPRTKVADRPQNGPTPATQSA), 1245–1389 (PFCL…VSLP), and 1418–1469 (AGQA…PSML). Residues 36-53 (QQHQPQFQQQQQQQQQQQ) show a composition bias toward low complexity. Residues 66 to 79 (SNGHTSPIPSQVNG) are compositionally biased toward polar residues. The span at 92-109 (TNTNTGSHSHSNSGNTNT) shows a compositional bias: low complexity. Residues 110–126 (DADKEQEREKAKEKANE) show a composition bias toward basic and acidic residues. Positions 127-136 (EESEDSDDDV) are enriched in acidic residues. Composition is skewed to low complexity over residues 137–188 (VVVL…GGSS), 196–255 (SSRQ…ANSK), 274–292 (ASSNSNSNSSNNSSNSNGG), 327–337 (NSSSSNNNNSS), and 346–357 (SPTSNSPVSGAS). Residues 437–452 (NSIAPANSTPMSNGTN) are compositionally biased toward polar residues. Over residues 453–472 (ASISPGSAHSSSHSHQGVSP) the composition is skewed to low complexity. 4 positions are modified to phosphoserine: serine 479, serine 482, serine 485, and serine 497. Polar residues-rich tracts occupy residues 503 to 521 (SVSSLNGGASSGEQHQSQL) and 608 to 617 (EPQTAPQPQQ). The segment covering 618–642 (SPHGSSHSSRSGSGSGSHSSMASDG) has biased composition (low complexity). Composition is skewed to basic and acidic residues over residues 643–658 (SLRRKSSDSLDSHGAQ) and 674–691 (SESRAPEEPQLPTKKESV). 2 positions are modified to phosphoserine: serine 651 and serine 654. Over residues 875–892 (SECQELDQDQDVEQEQEP) the composition is skewed to acidic residues. Low complexity predominate over residues 927–944 (PGSSSPSPSPLKPKTSLG). Positions 1040-1054 (FEQEQQEQQRRKEEQ) are enriched in basic and acidic residues. Over residues 1055 to 1076 (QQQIQRQQQHLQQLQQQQMEQQ) the composition is skewed to low complexity. The segment covering 1208–1217 (NGPTPATQSA) has biased composition (polar residues). The span at 1252 to 1278 (QQQQQQTAQQQQSAQQQQQSSQQTQQQ) shows a compositional bias: low complexity. Residues 1291 to 1298 (PKKKRHKV) carry the Nuclear localization signal motif. Low complexity predominate over residues 1328-1348 (PQQQQQQQQQQQQQQQQQQQQ). A compositionally biased stretch (polar residues) spans 1349–1367 (ASNGGNSNATPAQSPTRSS). The span at 1374 to 1384 (PQPPPPPPPMM) shows a compositional bias: pro residues. Positions 1427 to 1437 (HQHHQQHHPHH) are enriched in basic residues. Positions 1438–1451 (QSMQLSSSPPGSLG) are enriched in low complexity. The Prospero-type homeo domain maps to 1545–1603 (SSTLTPMHLRKAKLMFFWVRYPSSAVLKMYFPDIKFNKNNTAQLVKWFSNFREFYYIQM). Residues 1545–1703 (SSTLTPMHLR…KSPNFLEQLE (159 aa)) are homeo-Prospero. Residues 1604 to 1703 (EKYARQAVTE…KSPNFLEQLE (100 aa)) enclose the Prospero domain.

Belongs to the Prospero homeodomain family.

The protein localises to the nucleus. It is found in the cytoplasm. The protein resides in the cell cortex. In terms of biological role, homeodomain protein that controls neuronal identity. As a transcriptional factor, regulates the expression of ftz, eve and en in a subset of neuroblast progeny and modulates the transcriptional activity of other homeodomain proteins such as Dfd. Required for proper neuronal differentiation, axonal outgrowth and pathfinding of most or all neurons and their precursors in central and peripheral nervous systems. Regulates asymmetric stem cell self-renewal together with brat. The sequence is that of Homeobox protein prospero (pros) from Drosophila melanogaster (Fruit fly).